Reading from the N-terminus, the 793-residue chain is Phenylalanine--tRNA ligase beta subunit (793 aa).

Residues 39-148 (AGQFTHVIVA…DEAPIGMDLR (110 aa)) form the tRNA-binding domain. A B5 domain is found at 401-477 (PGTVSFLFDT…RLYGYDKLQA (77 aa)). Mg(2+) is bound by residues D455, D461, E464, and E465. The region spanning 698 to 792 (SKYPQIRRDL…LENEFSILLR (95 aa)) is the FDX-ACB domain.

This sequence belongs to the phenylalanyl-tRNA synthetase beta subunit family. Type 1 subfamily. In terms of assembly, tetramer of two alpha and two beta subunits. Mg(2+) is required as a cofactor.

Its subcellular location is the cytoplasm. It catalyses the reaction tRNA(Phe) + L-phenylalanine + ATP = L-phenylalanyl-tRNA(Phe) + AMP + diphosphate + H(+). The chain is Phenylalanine--tRNA ligase beta subunit from Legionella pneumophila (strain Paris).